We begin with the raw amino-acid sequence, 302 residues long: Dioxygenase olcK (302 aa).

Fe cation contacts are provided by H136, D138, and H213.

The protein belongs to the PhyH family. Homodimer. Fe cation is required as a cofactor.

The protein localises to the peroxisome matrix. Its pathway is secondary metabolite biosynthesis; terpenoid biosynthesis. Dioxygenase; part of the gene cluster that mediates the biosynthesis of 15-deoxyoxalicine B. The first step of the pathway is the synthesis of nicotinyl-CoA from nicotinic acid by the nicotinic acid-CoA ligase olcI. Nicotinyl-CoA is then a substrate of polyketide synthase olcA to produce 4-hydroxy-6-(3-pyridinyl)-2H-pyran-2-one (HPPO) which is further prenylated by the polyprenyl transferase olcH to yield geranylgeranyl-HPPO. Geranylgeranyl pyrophosphate is provided by the cluster-specific geranylgeranyl pyrophosphate synthase olcC. The FAD-dependent monooxygenase olcE catalyzes the epoxidation of geranylgeranyl-HPPO and the terpene cyclase olcD catalyzes the cyclization of the terpenoid component, resulting in the formation of the tricyclic terpene moiety seen in predecaturin E. The cytochrome P450 monooxygenase then catalyzes the allylic oxidation of predecaturin E, which is followed by spirocylization with concomitant loss of one molecule of water to form decaturin E. Decaturin E is the substrate of the cytochrome P450 monooxygenase olcJ which hydroxylates it at the C-29 position to form decaturin F. The short-chain dehydrogenase/reductase olcF may catalyze the oxidation of decaturin F to generate the 29-hydroxyl-27-one intermediate, and subsequent hemiacetal formation probably leads to the formation of decaturin C. The dioxygenase olcK may be a peroxisomal enzyme that catalyzes the hydroxylation of decaturin C into decaturin A once decaturin C is shuttled into the peroxisome by the MFS transporter olcL. Finally the cytochrome P450 monooxygenase olcB catalyzes the oxidative rearrangement to yield 15-deoxyoxalicine B. In the absence of olcJ, decaturin E may be shunted to a pathway in which it is oxidized to a ketone, possibly by olcF, to form decaturin D, which undergoes further allylic oxidation to yield decaturin G. Moreover, in the absence of oclK or oclL, oclB can convert decaturin C into 15-deoxyoxalicine A. The sequence is that of Dioxygenase olcK from Penicillium canescens.